A 360-amino-acid polypeptide reads, in one-letter code: Aminomethyltransferase (360 aa).

It belongs to the GcvT family. As to quaternary structure, the glycine cleavage system is composed of four proteins: P, T, L and H.

It carries out the reaction N(6)-[(R)-S(8)-aminomethyldihydrolipoyl]-L-lysyl-[protein] + (6S)-5,6,7,8-tetrahydrofolate = N(6)-[(R)-dihydrolipoyl]-L-lysyl-[protein] + (6R)-5,10-methylene-5,6,7,8-tetrahydrofolate + NH4(+). Its function is as follows. The glycine cleavage system catalyzes the degradation of glycine. This Methylococcus capsulatus (strain ATCC 33009 / NCIMB 11132 / Bath) protein is Aminomethyltransferase.